The chain runs to 23 residues: Caerulein precursor fragment BM2 (23 aa).

Expressed by the skin glands.

Its subcellular location is the secreted. Its function is as follows. Antimicrobial peptide. The polypeptide is Caerulein precursor fragment BM2 (Xenopus boumbaensis (Mawa clawed frog)).